Consider the following 1247-residue polypeptide: DNA-directed RNA polymerase subunit beta (1247 aa).

This sequence belongs to the RNA polymerase beta chain family. As to quaternary structure, in plastids the minimal PEP RNA polymerase catalytic core is composed of four subunits: alpha, beta, beta', and beta''. When a (nuclear-encoded) sigma factor is associated with the core the holoenzyme is formed, which can initiate transcription.

It is found in the plastid. The catalysed reaction is RNA(n) + a ribonucleoside 5'-triphosphate = RNA(n+1) + diphosphate. In terms of biological role, DNA-dependent RNA polymerase catalyzes the transcription of DNA into RNA using the four ribonucleoside triphosphates as substrates. This is DNA-directed RNA polymerase subunit beta (rpoB) from Helicosporidium sp. subsp. Simulium jonesii (Green alga).